Consider the following 864-residue polypeptide: Dynamin-1 (864 aa).

The Dynamin-type G domain occupies 28–294 (DLDLPQIAVV…LTNHIRDTLP (267 aa)). The interval 38–45 (GGQSAGKS) is G1 motif. The GDP site is built by Ser-41, Gly-43, Lys-44, Ser-45, Ser-46, Arg-59, and Gly-60. Positions 64–66 (VTR) are G2 motif. At Tyr-80 the chain carries Phosphotyrosine. Tyr-125 is modified (3'-nitrotyrosine; alternate). Tyr-125 bears the Phosphotyrosine; alternate mark. A G3 motif region spans residues 136-139 (DLPG). A G4 motif region spans residues 205-208 (TKLD). The GDP site is built by Lys-206, Asp-208, Asp-211, Asn-236, Arg-237, and Gln-239. The segment at 235-238 (VNRS) is G5 motif. 2 positions are modified to phosphoserine: Ser-306 and Ser-347. At Tyr-354 the chain carries Phosphotyrosine. Ser-512 bears the Phosphoserine mark. The region spanning 519 to 625 (LVIRKGWLTI…WKASFLRAGV (107 aa)) is the PH domain. One can recognise a GED domain in the interval 659–750 (VETIRNLVDS…IIGDINTTTV (92 aa)). The segment at 767 to 864 (SVPAGRRSPT…PESPRPPFDL (98 aa)) is disordered. Ser-774 bears the Phosphoserine; by CDK5 mark. Residue Ser-778 is modified to Phosphoserine. Arg-796 carries the omega-N-methylarginine modification. Phosphoserine is present on Ser-822. Residues 825–843 (PFGPPPQVPSRPNRAPPGV) show a composition bias toward pro residues. A phosphoserine mark is found at Ser-851 and Ser-857.

This sequence belongs to the TRAFAC class dynamin-like GTPase superfamily. Dynamin/Fzo/YdjA family. In terms of assembly, homodimer; homodimerization is mediated by the dynamin-type G domain which promotes assembly-stimulated GTPase activity. Homo-tetramer formed from two dimers in the absence of lipid. Oligomerizes into a helical polymer that self-assembles around the vesicle membrane, when associated to the menbrane through lipid binding. Interacts (via C-terminal proline-rich domain (PRD)) with SNX9 (via SH3 domain); this interaction allows regulation of DNM1 self-assembly during late stages of endocytic vesicle formation and supports DNM1's early functions in accelerating clathrin-coated pits (CCPs) maturation in non neuronals cell. Interacts (via C-terminal proline-rich domain (PRD)) with MYO1E (via SH3 domain); this interaction regulates receptor-mediated endocytosis. Interacts with SNX33 (via SH3 domain); this interaction decreases DNM1-dependent endocytosis. Interacts with DIAPH1. Interacts with GRB2 (via SH3 domain); this interaction mediates disassembly of DNM1 polymers, therefore modulates self-assembly. Forms a complex with BIN1 (via SH3 domain) and SH3GL2 (via SH3 domain). Forms a complex with SH3GL2 (via SH3 domain) and AMPH (via SH3 domain). Forms a complex with SH3GL2 (via SH3 domain) and SYNJ1. Interacts with AMPH. Interacts (via C-terminal proline-rich domain (PRD)) with SYT1; this interaction facilitates vesicle fission during clathrin-mediated endocytosis (CME). Interacts (via C-terminal proline-rich domain (PRD)) with PLCG1 (via SH3 domain); this interaction stimulates the release of GDP from DNM1 and enhances DNM1-dependent endocytosis. Interacts with SNPH; this interaction inhibits the binding of DNM1 to AMPH and DNM1-receptor-mediated endocytosis. Interacts with CAV1. Interacts with SH3GLB1 (via SH3 domain). Interacts with PACSIN1 (via SH3 domain), PACSIN2 (via SH3 domain) and PACSIN3 (via SH3 domain). Interacts with UNC119; this interaction decreases DNM1's GTPase activity and affects DNM1's interaction with AMPH. Interacts (GTP-bound form) with DNAJC6; this interaction allows clathrin-coated vesicle (CCV) formation at the plasma membrane. In terms of processing, phosphorylation at Ser-774 by GSK3B/GSK3-beta leads to inactivation of receptor-mediated endocytosis in non-neuronal cells. Dephosphorylation at Ser-774, through the EGFR downstream signaling, leads to activation and regulates early stages of clathrin-mediated endocytosis (CME). Phosphorylated by CDK5 leading to synaptic vesicle endocytosis (SVE) activation. Brain-specific (peripheral sensory neurons).

It localises to the cytoplasmic vesicle. It is found in the clathrin-coated vesicle. Its subcellular location is the golgi apparatus. The protein localises to the cell membrane. The protein resides in the membrane. It localises to the clathrin-coated pit. It is found in the presynapse. Its subcellular location is the secretory vesicle. The protein localises to the chromaffin granule. It catalyses the reaction GTP + H2O = GDP + phosphate + H(+). Functionally, catalyzes the hydrolysis of GTP and utilizes this energy to mediate vesicle scission and participates in many forms of endocytosis, such as clathrin-mediated endocytosis or synaptic vesicle endocytosis as well as rapid endocytosis (RE). Associates to the membrane, through lipid binding, and self-assembles into rings and stacks of interconnected rings through oligomerization to form a helical polymer around the vesicle membrane leading to constriction of invaginated coated pits around their necks. Self-assembly of the helical polymer induces membrane tubules narrowing until the polymer reaches a length sufficient to trigger GTP hydrolysis. Depending on the curvature imposed on the tubules, membrane detachment from the helical polymer upon GTP hydrolysis can cause spontaneous hemifission followed by complete fission. May play a role in regulating early stages of clathrin-mediated endocytosis in non-neuronal cells through its activation by dephosphorylation via the signaling downstream of EGFR. Controls vesicle size at a step before fission, during formation of membrane pits, at hippocampal synapses. Controls plastic adaptation of the synaptic vesicle recycling machinery to high levels of activity. Mediates rapid endocytosis (RE), a Ca(2+)-dependent and clathrin- and K(+)-independent process in chromaffin cells. Microtubule-associated force-producing protein involved in producing microtubule bundles and able to bind and hydrolyze GTP. Through its interaction with DNAJC6, acts during the early steps of clathrin-coated vesicle (CCV) formation. The sequence is that of Dynamin-1 (Dnm1) from Rattus norvegicus (Rat).